Here is a 734-residue protein sequence, read N- to C-terminus: Subtilisin-like protease (734 aa).

Positions 1–20 are cleaved as a signal peptide; it reads MTCICIFSIAFLLSFHLTTA. The Inhibitor I9 domain occupies 28–109; it reads TYIVHVDKPD…AKLEKVLTLH (82 aa). Positions 114 to 591 constitute a Peptidase S8 domain; the sequence is PNFLGLYQNM…AGHVNPSKAS (478 aa). Residue aspartate 141 is the Charge relay system of the active site. N-linked (GlcNAc...) asparagine glycosylation occurs at asparagine 172. Histidine 199 functions as the Charge relay system in the catalytic mechanism. N-linked (GlcNAc...) asparagine glycans are attached at residues asparagine 222 and asparagine 306. Residues 357-442 enclose the PA domain; it reads PLVYPGTSDE…THVGYAAGEM (86 aa). Asparagine 448 and asparagine 509 each carry an N-linked (GlcNAc...) asparagine glycan. The active-site Charge relay system is the serine 524. A glycan (N-linked (GlcNAc...) asparagine) is linked at asparagine 652.

This sequence belongs to the peptidase S8 family.

It localises to the secreted. It is found in the extracellular space. The protein resides in the apoplast. In terms of biological role, required for arbuscular mycorrhiza (AM) development during AM symbiosis with AM fungi (e.g. Glomeromycota intraradices). This Petunia hybrida (Petunia) protein is Subtilisin-like protease.